Consider the following 216-residue polypeptide: MIKNLSRYALVTAFALFLSGCITRTEQQPAPVDEAKPGTEQPAQPTQPVPTVPSVPTVPAQPGPIEHPDQTSQPAPRVRHYDWNGAMQPMVGKMLQAQGVTAGSVLLVDSVNNRTNGTLNAGEATETLRNALANNGKFTLVSAQQLAVAKQQLGLSPQDSLGSRSKAMGIARNVGAQYVLYSNATGNVNTPALQMQLMLVQTGEIIWSGKGAVSQQ.

A signal peptide spans Met-1–Gly-20. Cys-21 carries the N-palmitoyl cysteine lipid modification. Cys-21 carries S-diacylglycerol cysteine lipidation. A disordered region spans residues Gln-28 to Arg-77.

Belongs to the LpoB family. As to quaternary structure, interacts with PBP1b.

The protein resides in the cell outer membrane. Functionally, regulator of peptidoglycan synthesis that is essential for the function of penicillin-binding protein 1B (PBP1b). The protein is Penicillin-binding protein activator LpoB of Enterobacter sp. (strain 638).